Consider the following 139-residue polypeptide: uncharacterized protein (139 aa).

Positions 1-32 (MEFHDDKKNELQKKEEIITEAIDTLFQSSAFG) are cleaved as a signal peptide. One can recognise a sHSP domain in the interval 44 to 139 (SSLKDVQTTI…TLFFPKNKHE (96 aa)).

The protein belongs to the small heat shock protein (HSP20) family.

This is an uncharacterized protein from Bacillus subtilis (strain 168).